A 455-amino-acid polypeptide reads, in one-letter code: Glycylpeptide N-tetradecanoyltransferase (455 aa).

Residue 38–41 (HKFW) coordinates tetradecanoyl-CoA. The myristoyl CoA-binding stretch occupies residues 168–204 (INFLCVHKQLRSKRLTPVLIKEITRRVNKCDIWHALY). Leu455 functions as the Proton acceptor; via carboxylate in the catalytic mechanism.

It belongs to the NMT family. Monomer. Post-translationally, the N-terminus is blocked.

It localises to the cytoplasm. The catalysed reaction is N-terminal glycyl-[protein] + tetradecanoyl-CoA = N-tetradecanoylglycyl-[protein] + CoA + H(+). Its activity is regulated as follows. Inhibited by diethylpyrocarbonate. Competitively inhibited by S-(2-oxo)pentadecyl-CoA, a non hydrolysable myristoyl-CoA analog, and by SC-58272, a peptidomimetic derived from the N-terminal sequence of a natural substrate. Functionally, adds a myristoyl group to the N-terminal glycine residue of certain cellular proteins. Substrate specificity requires an N-terminal glycine in the nascent polypeptide substrates. Uncharged amino acids are preferred at position 2 while neutral residues are favored at positions 3 and 4. Ser is present at position 5 in almost all known N-myristoyl proteins and Lys is commonly encountered at postion 6. The protein is Glycylpeptide N-tetradecanoyltransferase (NMT1) of Saccharomyces cerevisiae (strain ATCC 204508 / S288c) (Baker's yeast).